The chain runs to 321 residues: MSFRALSVFSLFLSYLILGSAEQCGRQAGGALCPGGLCCSQFGWCGNTDDYCKKENGCQSQCSGSGGDTGGLDSLITRERFDQMLLHRNDGGCPARGFYTYDAFIAAAKSFPAFATTGDDATRKREVAAFLAQTSHETTGGAGWAAPDGPYTWGYCYNRELNPADYCQWDPNYPCAPGKQYFGRGPMQLTWNYNYGQCGRAIGVDLLNNPDLLATDPTISFKSAFWFWMTPQSPKPSCHDVIIGAWSPSGSDQAAGRVPGFGLITNIINGGLECGQGWNAKVEDRIGFYKRYCDTLGVGYGNNLDCYNQRSYNNGPSVDSM.

Residues 1-21 form the signal peptide; it reads MSFRALSVFSLFLSYLILGSA. Residues 22-64 form the Chitin-binding type-1 domain; that stretch reads EQCGRQAGGALCPGGLCCSQFGWCGNTDDYCKKENGCQSQCSG. Disulfide bonds link Cys-24–Cys-39, Cys-33–Cys-45, Cys-38–Cys-52, Cys-58–Cys-62, Cys-93–Cys-156, Cys-167–Cys-175, and Cys-274–Cys-306. Residues 65–98 form a hinge region; it reads SGGDTGGLDSLITRERFDQMLLHRNDGGCPARGF. The interval 99–321 is catalytic; that stretch reads YTYDAFIAAA…YNNGPSVDSM (223 aa). The active-site Proton donor is the Glu-137.

The protein belongs to the glycosyl hydrolase 19 family. Chitinase class I subfamily.

It localises to the vacuole. It catalyses the reaction Random endo-hydrolysis of N-acetyl-beta-D-glucosaminide (1-&gt;4)-beta-linkages in chitin and chitodextrins.. In terms of biological role, defense against chitin-containing fungal pathogens. The chain is Endochitinase 1 (CHIA1) from Theobroma cacao (Cacao).